A 362-amino-acid chain; its full sequence is tRNA 2-selenouridine synthase (362 aa).

The region spanning 12-135 (FLNDTPLLDV…LRRFLIDEME (124 aa)) is the Rhodanese domain. The S-selanylcysteine intermediate role is filled by Cys95.

It belongs to the SelU family. In terms of assembly, monomer.

The catalysed reaction is 5-methylaminomethyl-2-thiouridine(34) in tRNA + selenophosphate + (2E)-geranyl diphosphate + H2O + H(+) = 5-methylaminomethyl-2-selenouridine(34) in tRNA + (2E)-thiogeraniol + phosphate + diphosphate. It carries out the reaction 5-methylaminomethyl-2-thiouridine(34) in tRNA + (2E)-geranyl diphosphate = 5-methylaminomethyl-S-(2E)-geranyl-thiouridine(34) in tRNA + diphosphate. The enzyme catalyses 5-methylaminomethyl-S-(2E)-geranyl-thiouridine(34) in tRNA + selenophosphate + H(+) = 5-methylaminomethyl-2-(Se-phospho)selenouridine(34) in tRNA + (2E)-thiogeraniol. It catalyses the reaction 5-methylaminomethyl-2-(Se-phospho)selenouridine(34) in tRNA + H2O = 5-methylaminomethyl-2-selenouridine(34) in tRNA + phosphate. Its function is as follows. Involved in the post-transcriptional modification of the uridine at the wobble position (U34) of tRNA(Lys), tRNA(Glu) and tRNA(Gln). Catalyzes the conversion of 2-thiouridine (S2U-RNA) to 2-selenouridine (Se2U-RNA). Acts in a two-step process involving geranylation of 2-thiouridine (S2U) to S-geranyl-2-thiouridine (geS2U) and subsequent selenation of the latter derivative to 2-selenouridine (Se2U) in the tRNA chain. This is tRNA 2-selenouridine synthase from Alcanivorax borkumensis (strain ATCC 700651 / DSM 11573 / NCIMB 13689 / SK2).